The following is a 290-amino-acid chain: MVGEMDKPLVSVVMATYNEPEKYLKESIESIXNQTXKDFXFIIVLDNPNNKKAEEIIKEYQQKDKRIIFIKNERNLGRGASRNKAVNIARGKYIAILDADDIALPKRLEKQFKYMENNRDIDLLFSWVYFIDENGNILKEFKPEKYKFKEIKKYFFKEHLTVHPSMMVKSKILKKLKYDEKLIRSQDYDFWIRCIANDYKFDIIEEFLLKYRIPNRDNYLSRIKKQKLYSYYTLKTHWKNKKHFCNNVYFWKVFFYSLVVYLFIVLTPTFILKILIDIKDKKTEISTKGH.

This sequence belongs to the glycosyltransferase 2 family.

This is an uncharacterized protein from Methanocaldococcus jannaschii (strain ATCC 43067 / DSM 2661 / JAL-1 / JCM 10045 / NBRC 100440) (Methanococcus jannaschii).